We begin with the raw amino-acid sequence, 148 residues long: Snaclec 3 (148 aa).

The signal sequence occupies residues 1 to 23; that stretch reads MGRFISVSFGLLVVFLSLSGTEA. 3 disulfides stabilise this stretch: Cys-27–Cys-38, Cys-55–Cys-144, and Cys-121–Cys-136. The 112-residue stretch at 34-145 folds into the C-type lectin domain; sequence YDQNCYKVFT…CSSTHNFVCK (112 aa).

The protein belongs to the snaclec family. Heterodimer; disulfide-linked.

It localises to the secreted. Its function is as follows. Interferes with one step of hemostasis (modulation of platelet aggregation, or coagulation cascade, for example). The sequence is that of Snaclec 3 from Daboia siamensis (Eastern Russel's viper).